Consider the following 32-residue polypeptide: Calcitonin (32 aa).

A disulfide bridge links Cys-1 with Cys-7. Pro-32 carries the post-translational modification Proline amide.

The protein belongs to the calcitonin family.

It is found in the secreted. Functionally, causes a rapid but short-lived drop in the level of calcium and phosphate in blood by promoting the incorporation of those ions in the bones. The sequence is that of Calcitonin from Anguilla japonica (Japanese eel).